The primary structure comprises 175 residues: Vesicle-associated membrane protein-associated protein SCS22 (175 aa).

Residues 1–125 enclose the MSP domain; it reads MRIVPEKLVF…DDIVFKKIKI (125 aa). Topologically, residues 1 to 154 are cytoplasmic; it reads MRIVPEKLVF…RAPSAGNGQS (154 aa). The disordered stretch occupies residues 133 to 152; the sequence is RKPSGNHDAESARAPSAGNG. A helical; Anchor for type IV membrane protein transmembrane segment spans residues 155–175; it reads LSSRALLIITVIALLVGWIYY.

It belongs to the VAMP-associated protein (VAP) (TC 9.B.17) family.

The protein localises to the membrane. In terms of biological role, targets proteins containing a FFAT motif to membranes. Involved in regulation of phospholipid metabolism. This is Vesicle-associated membrane protein-associated protein SCS22 (SCS22) from Saccharomyces cerevisiae (strain ATCC 204508 / S288c) (Baker's yeast).